A 343-amino-acid chain; its full sequence is Phenylalanine--tRNA ligase alpha subunit (343 aa).

Glu264 serves as a coordination point for Mg(2+).

It belongs to the class-II aminoacyl-tRNA synthetase family. Phe-tRNA synthetase alpha subunit type 1 subfamily. Tetramer of two alpha and two beta subunits. The cofactor is Mg(2+).

It localises to the cytoplasm. It carries out the reaction tRNA(Phe) + L-phenylalanine + ATP = L-phenylalanyl-tRNA(Phe) + AMP + diphosphate + H(+). In Azoarcus sp. (strain BH72), this protein is Phenylalanine--tRNA ligase alpha subunit.